The primary structure comprises 60 residues: Large ribosomal subunit protein uL30 (60 aa).

It belongs to the universal ribosomal protein uL30 family. In terms of assembly, part of the 50S ribosomal subunit.

The chain is Large ribosomal subunit protein uL30 from Dehalococcoides mccartyi (strain ATCC BAA-2266 / KCTC 15142 / 195) (Dehalococcoides ethenogenes (strain 195)).